The chain runs to 146 residues: Hemoglobin subunit beta (146 aa).

The Globin domain maps to 2–146 (HWSAEEKQLI…VAHALARKYH (145 aa)). The heme b site is built by His63 and His92.

This sequence belongs to the globin family. Heterotetramer of two alpha chains and two beta chains. In terms of tissue distribution, red blood cells.

Involved in oxygen transport from the lung to the various peripheral tissues. This chain is Hemoglobin subunit beta (HBB), found in Eudyptes chrysocome (Western rockhopper penguin).